The primary structure comprises 108 residues: Peptidyl-prolyl cis-trans isomerase FKBP1A (108 aa).

Residues 20–108 (GQTCVVHYTG…IFDVELLKLE (89 aa)) form the PPIase FKBP-type domain. Lys53 is modified (N6-acetyllysine; alternate). N6-succinyllysine; alternate is present on Lys53.

This sequence belongs to the FKBP-type PPIase family. FKBP1 subfamily. In terms of assembly, interacts with TGFBR1; prevents TGFBR1 phosphorylation by TGFBR2 and stabilizes it in the inactive conformation. Interacts with ACVR1B and SMAD7. Identified in a complex composed of RYR1, PDE4D, PKA, FKBP1A and protein phosphatase 1 (PP1). Interacts directly with RYR2 and RYR3. Interacts with GLMN; rapamycin and FK506 abolish the interaction with GLMN in a dose dependent manner. Interacts directly with RYR1.

It is found in the cytoplasm. The protein resides in the cytosol. It localises to the sarcoplasmic reticulum membrane. It catalyses the reaction [protein]-peptidylproline (omega=180) = [protein]-peptidylproline (omega=0). Inhibited by both FK506 and rapamycin. In terms of biological role, keeps in an inactive conformation TGFBR1, the TGF-beta type I serine/threonine kinase receptor, preventing TGF-beta receptor activation in absence of ligand. May modulate the RYR1 calcium channel activity. PPIases accelerate the folding of proteins. It catalyzes the cis-trans isomerization of proline imidic peptide bonds in oligopeptides. This chain is Peptidyl-prolyl cis-trans isomerase FKBP1A (FKBP1A), found in Bos taurus (Bovine).